The sequence spans 484 residues: Glutamate--tRNA ligase (484 aa).

The 'HIGH' region signature appears at 11–21; that stretch reads PSPTGLLHIGN. The 'KMSKS' region motif lies at 255-259; sequence KLSKR. An ATP-binding site is contributed by Lys258.

This sequence belongs to the class-I aminoacyl-tRNA synthetase family. Glutamate--tRNA ligase type 1 subfamily. Monomer.

The protein resides in the cytoplasm. The catalysed reaction is tRNA(Glu) + L-glutamate + ATP = L-glutamyl-tRNA(Glu) + AMP + diphosphate. In terms of biological role, catalyzes the attachment of glutamate to tRNA(Glu) in a two-step reaction: glutamate is first activated by ATP to form Glu-AMP and then transferred to the acceptor end of tRNA(Glu). This is Glutamate--tRNA ligase from Streptococcus suis (strain 98HAH33).